The primary structure comprises 525 residues: MTTNIHDQRILILDFGSQYTQLIARRVREIGVYCELWAWDVTEEQIREFNPQGIILSGGPESVTEEGSPRAPDYVFEAGVPVLGVCYGMQTMAHQLGGGVLGSDKREFGYAQVEVIKPSPLLDKIEDAIGDNGAALLDVWMSHGDKVAAIPEGFETIAQTASCPHAAMYNEEKQFYGVQFHPEVTHTRQGMRLLTQFVMDICKCEKLWTAGAIIEDAIERIKEKVGDERVILGLSGGVDSSVTAMLLHRAIGKNLTCVFVDNGLLRLNEADQVMEMFGDHFGLNIIRVDAEGRFLDRLKGIEDPELKRKAIGNEFVRVFDEEASKLENAKWLAQGTIYPDVIESAGSATGKAHVIKSHHNVGGLPEDMELGLVEPLRELFKDEVRKIGLELGLPYDMLYRHPFPGPGLGVRVLGEIKKEYCDLLRRADAIFIEELYAADLYQKVSQAFTVFLPVRSVGVMGDARKYDWVVSLRAVETIDFMTAHWAHLPYDFLGKVSNRIINEIDGISRVVYDISGKPPATIEWE.

The Glutamine amidotransferase type-1 domain occupies 9 to 207 (RILILDFGSQ…VMDICKCEKL (199 aa)). The active-site Nucleophile is the C86. Catalysis depends on residues H181 and E183. The GMPS ATP-PPase domain occupies 208–400 (WTAGAIIEDA…LGLPYDMLYR (193 aa)). An ATP-binding site is contributed by 235-241 (SGGVDSS).

In terms of assembly, homodimer.

The enzyme catalyses XMP + L-glutamine + ATP + H2O = GMP + L-glutamate + AMP + diphosphate + 2 H(+). The protein operates within purine metabolism; GMP biosynthesis; GMP from XMP (L-Gln route): step 1/1. Catalyzes the synthesis of GMP from XMP. The polypeptide is GMP synthase [glutamine-hydrolyzing] (Alteromonas mediterranea (strain DSM 17117 / CIP 110805 / LMG 28347 / Deep ecotype)).